The chain runs to 1088 residues: RNA-directed RNA polymerase (1088 aa).

The 187-residue stretch at 501-687 folds into the RdRp catalytic domain; that stretch reads LSYGDVTRFL…AKRYIAGGKI (187 aa).

This sequence belongs to the reoviridae RNA-directed RNA polymerase family. Interacts with VP3 (Potential). Interacts with VP2; this interaction activates VP1. Interacts with NSP5; this interaction is probably necessary for the formation of functional virus factories. Interacts with NSP2; this interaction is weak. Requires Mg(2+) as cofactor.

The protein localises to the virion. The catalysed reaction is RNA(n) + a ribonucleoside 5'-triphosphate = RNA(n+1) + diphosphate. Functionally, RNA-directed RNA polymerase that is involved in both transcription and genome replication. Together with VP3 capping enzyme, forms an enzyme complex positioned near the channels situated at each of the five-fold vertices of the core. Following infection, the outermost layer of the virus is lost, leaving a double-layered particle (DLP) made up of the core and VP6 shell. VP1 then catalyzes the transcription of fully conservative plus-strand genomic RNAs that are extruded through the DLP's channels into the cytoplasm where they function as mRNAs for translation of viral proteins. One copy of each of the viral (+)RNAs is also recruited during core assembly, together with newly synthesized polymerase complexes and VP2. The polymerase of these novo-formed particles catalyzes the synthesis of complementary minus-strands leading to dsRNA formation. To do so, the polymerase specifically recognizes and binds 4 bases 5'-UGUG-3' in the conserved 3'-sequence of plus-strand RNA templates. VP2 presumably activates the autoinhibited VP1-RNA complex to coordinate packaging and genome replication. Once dsRNA synthesis is complete, the polymerase switches to the transcriptional mode, thus providing secondary transcription. The polypeptide is RNA-directed RNA polymerase (Rotavirus A (strain RVA/SA11-Both/G3P5B[2]) (RV-A)).